The chain runs to 59 residues: uncharacterized protein (59 aa).

The signal sequence occupies residues 1–21 (MYLFYVLLSSLFLSALIYVIG). The Extracellular portion of the chain corresponds to 22 to 24 (KSH). The chain crosses the membrane as a helical span at residues 25-45 (PNLFMFISLFVNVVTILYLVF). At 46–59 (KDYGQYIIAKPINT) the chain is on the cytoplasmic side.

The protein resides in the host membrane. This is an uncharacterized protein from Acidianus convivator (ABV).